A 396-amino-acid polypeptide reads, in one-letter code: Cystathionine beta-lyase (396 aa).

Position 211 is an N6-(pyridoxal phosphate)lysine (K211).

The protein belongs to the trans-sulfuration enzymes family. Homotetramer. Requires pyridoxal 5'-phosphate as cofactor.

The protein localises to the cytoplasm. It catalyses the reaction L,L-cystathionine + H2O = L-homocysteine + pyruvate + NH4(+). It carries out the reaction an S-substituted L-cysteine + H2O = a thiol + pyruvate + NH4(+). It functions in the pathway amino-acid biosynthesis; L-methionine biosynthesis via de novo pathway; L-homocysteine from L-cystathionine: step 1/1. Catalyzes the cleavage of cystathionine to homocysteine, pyruvate and ammonia during methionine biosynthesis. In Haemophilus influenzae (strain ATCC 51907 / DSM 11121 / KW20 / Rd), this protein is Cystathionine beta-lyase (metC).